A 441-amino-acid chain; its full sequence is Transcription factor TOXE (441 aa).

Residues 14 to 40 form a basic DNA-binding region region; sequence TDINERRKLQNRVAQRKYRTRQKTRMK. The segment at 209–243 is disordered; the sequence is FEPNDQRKTENLPREPCGSCPSSSHGYSPTSGNPS. Basic and acidic residues predominate over residues 212 to 221; it reads NDQRKTENLP. The span at 228–241 shows a compositional bias: polar residues; sequence CPSSSHGYSPTSGN. ANK repeat units follow at residues 289 to 318, 322 to 351, 355 to 384, and 413 to 440; these read DQFS…PLDI, SGKT…EMLA, EGNS…SCRE, and EGMT…SANV.

It belongs to the bZIP family. In terms of assembly, monomer.

It localises to the nucleus. Its function is as follows. Transcription factor, part of the diffuse TOX2 gene cluster that mediates the biosynthesis of the HC-toxin, cyclic tetrapeptide of structure cyclo(D-Pro-L-Ala-D-Ala-L-Aeo), where Aeo stands for 2-amino-9,10-epoxi-8-oxodecanoic acid. HC-toxin is a determinant of specificity and virulence in the interaction between the producing fungus and its host, maize. TOXE is a pathway-specific transcription factor which coordinates the expression of genes involved in HC-toxin biosynthesis. Binds to the tox-box, a 10-bp motif with the consensus 5'-ATCTCNCGNA-3', which is found in the promoter of all genes involved in HC-toxin biosynthesis. Required for pathogenicity of the fungus on maize. The protein is Transcription factor TOXE of Cochliobolus carbonum (Maize leaf spot fungus).